Reading from the N-terminus, the 436-residue chain is Protein arginine methyltransferase NDUFAF7, mitochondrial (436 aa).

The transit peptide at Met1 to His41 directs the protein to the mitochondrion. A disordered region spans residues Gln413 to His436.

It belongs to the NDUFAF7 family. Interacts with NDUFS2.

The protein resides in the mitochondrion. It catalyses the reaction L-arginyl-[protein] + 2 S-adenosyl-L-methionine = N(omega),N(omega)'-dimethyl-L-arginyl-[protein] + 2 S-adenosyl-L-homocysteine + 2 H(+). In terms of biological role, arginine methyltransferase involved in the assembly or stability of mitochondrial NADH:ubiquinone oxidoreductase complex (complex I). Acts by mediating symmetric dimethylation of 'Arg-118' of NDUFS2 after it assembles into the complex I, stabilizing the early intermediate complex. The polypeptide is Protein arginine methyltransferase NDUFAF7, mitochondrial (Rattus norvegicus (Rat)).